The sequence spans 229 residues: MATWAQFGLQDASSPLMEELTYFHDYALIVLTLITILVFYGLVSLLLSSSTNRFFLEGQELETIWTVVPAFILIFIALPSLQLLYLMDEVNNPFLTIKAIGHQWYWSYEYTDYNDLEFDSYMVPTSDVSLGNPRLLEVDNRLILPMQNPIRVLVSSADVLHSWAVPSLGVKMDAVPGRLNQTTFFAARAGLFYGQCSEICGANHSFMPILIESVPFSNFENWVAQYIEE.

Topologically, residues 1 to 26 are mitochondrial intermembrane; sequence MATWAQFGLQDASSPLMEELTYFHDY. The chain crosses the membrane as a helical span at residues 27 to 48; sequence ALIVLTLITILVFYGLVSLLLS. The Mitochondrial matrix segment spans residues 49–62; that stretch reads SSTNRFFLEGQELE. Residues 63 to 82 traverse the membrane as a helical segment; that stretch reads TIWTVVPAFILIFIALPSLQ. Residues 83-229 are Mitochondrial intermembrane-facing; that stretch reads LLYLMDEVNN…ENWVAQYIEE (147 aa). Residues His161, Cys196, Glu198, Cys200, His204, and Met207 each coordinate Cu cation. Glu198 provides a ligand contact to Mg(2+).

This sequence belongs to the cytochrome c oxidase subunit 2 family. Component of the cytochrome c oxidase (complex IV, CIV), a multisubunit enzyme composed of a catalytic core of 3 subunits and several supernumerary subunits. The complex exists as a monomer or a dimer and forms supercomplexes (SCs) in the inner mitochondrial membrane with ubiquinol-cytochrome c oxidoreductase (cytochrome b-c1 complex, complex III, CIII). It depends on Cu cation as a cofactor.

The protein localises to the mitochondrion inner membrane. It carries out the reaction 4 Fe(II)-[cytochrome c] + O2 + 8 H(+)(in) = 4 Fe(III)-[cytochrome c] + 2 H2O + 4 H(+)(out). Component of the cytochrome c oxidase, the last enzyme in the mitochondrial electron transport chain which drives oxidative phosphorylation. The respiratory chain contains 3 multisubunit complexes succinate dehydrogenase (complex II, CII), ubiquinol-cytochrome c oxidoreductase (cytochrome b-c1 complex, complex III, CIII) and cytochrome c oxidase (complex IV, CIV), that cooperate to transfer electrons derived from NADH and succinate to molecular oxygen, creating an electrochemical gradient over the inner membrane that drives transmembrane transport and the ATP synthase. Cytochrome c oxidase is the component of the respiratory chain that catalyzes the reduction of oxygen to water. Electrons originating from reduced cytochrome c in the intermembrane space (IMS) are transferred via the dinuclear copper A center (CU(A)) of subunit 2 and heme A of subunit 1 to the active site in subunit 1, a binuclear center (BNC) formed by heme A3 and copper B (CU(B)). The BNC reduces molecular oxygen to 2 water molecules using 4 electrons from cytochrome c in the IMS and 4 protons from the mitochondrial matrix. The chain is Cytochrome c oxidase subunit 2 (COII) from Paracentrotus lividus (Common sea urchin).